The primary structure comprises 168 residues: Transcription elongation factor GreB (168 aa).

It belongs to the GreA/GreB family. GreB subfamily.

Necessary for efficient RNA polymerase transcription elongation past template-encoded arresting sites. The arresting sites in DNA have the property of trapping a certain fraction of elongating RNA polymerases that pass through, resulting in locked ternary complexes. Cleavage of the nascent transcript by cleavage factors such as GreA or GreB allows the resumption of elongation from the new 3'terminus. GreB releases sequences of up to 9 nucleotides in length. In Xanthomonas axonopodis pv. citri (strain 306), this protein is Transcription elongation factor GreB.